Consider the following 563-residue polypeptide: Eukaryotic translation initiation factor 3 subunit D-1 (563 aa).

The segment at 98–167 (VQKPPHQRGR…GPPPKMRESS (70 aa)) is disordered. Positions 100–121 (KPPHQRGRFRNMRNSRSGRGRN) are enriched in basic residues. T128 is subject to Phosphothreonine. An RNA gate region spans residues 291–305 (EFDLLTVNETSVEPP).

The protein belongs to the eIF-3 subunit D family. Component of the eukaryotic translation initiation factor 3 (eIF-3) complex. The eIF-3 complex interacts with pix.

It is found in the cytoplasm. MRNA cap-binding component of the eukaryotic translation initiation factor 3 (eIF-3) complex, which is involved in protein synthesis of a specialized repertoire of mRNAs and, together with other initiation factors, stimulates binding of mRNA and methionyl-tRNAi to the 40S ribosome. The eIF-3 complex specifically targets and initiates translation of a subset of mRNAs involved in cell proliferation. In the eIF-3 complex, eif3d specifically recognizes and binds the 7-methylguanosine cap of a subset of mRNAs. In Drosophila mojavensis (Fruit fly), this protein is Eukaryotic translation initiation factor 3 subunit D-1.